The primary structure comprises 279 residues: MSHYGRIKLLLEQHGLSPNKRFGQNFLVDPSVAPRIVALAGIKAGDRVLEIGPGVGSLTIPLLQKAGAVTAVEKDRKLLPLLRVEAAGVGALTLVEEDALLVDYTALAQQLGGPLKLAANLPYNISTPLMVHLLDHHAAFECMALMFQKEVAQRLAAEPGSKAYGALTVQCALWAEIRHGFDVPPAAFLPAPKVTSAVVHVQMMRQPRVAVEDERHFVRVVKAAFAQRRKTLRNTLKTICPDPNRWLEQAGIDGALRAEVLTLAQFAQLANTPMPTSAP.

S-adenosyl-L-methionine is bound by residues Asn25, Leu27, Gly52, Glu73, Asp98, and Asn120.

The protein belongs to the class I-like SAM-binding methyltransferase superfamily. rRNA adenine N(6)-methyltransferase family. RsmA subfamily.

It is found in the cytoplasm. It carries out the reaction adenosine(1518)/adenosine(1519) in 16S rRNA + 4 S-adenosyl-L-methionine = N(6)-dimethyladenosine(1518)/N(6)-dimethyladenosine(1519) in 16S rRNA + 4 S-adenosyl-L-homocysteine + 4 H(+). Functionally, specifically dimethylates two adjacent adenosines (A1518 and A1519) in the loop of a conserved hairpin near the 3'-end of 16S rRNA in the 30S particle. May play a critical role in biogenesis of 30S subunits. The chain is Ribosomal RNA small subunit methyltransferase A from Magnetococcus marinus (strain ATCC BAA-1437 / JCM 17883 / MC-1).